The primary structure comprises 85 residues: Alpha-insect toxin BjaIT (85 aa).

Positions 1–19 (MNYLVVICFALLLMTGVES) are cleaved as a signal peptide. Residues 21–83 (RDAYIADNLN…VPIRIPGACR (63 aa)) enclose the LCN-type CS-alpha/beta domain. 4 disulfide bridges follow: C31/C82, C35/C55, C41/C65, and C45/C67. An Arginine amide modification is found at R83.

Belongs to the long (4 C-C) scorpion toxin superfamily. Sodium channel inhibitor family. Alpha subfamily. As to expression, expressed by the venom gland.

The protein resides in the secreted. Alpha toxins bind voltage-independently at site-3 of sodium channels (Nav) and inhibit the inactivation of the activated channels, thereby blocking neuronal transmission. This toxin is active against insects (para/tipE). The chain is Alpha-insect toxin BjaIT from Hottentotta judaicus (Black scorpion).